Reading from the N-terminus, the 601-residue chain is Deuterosome assembly protein 1 (601 aa).

3 coiled-coil regions span residues 14 to 59 (CEAE…NAQT), 86 to 197 (TQNY…KQQR), and 226 to 278 (IEKL…LQSR). 2 disordered regions span residues 115–135 (MKQN…PFEL) and 188–213 (QTQL…CESS). The span at 121 to 131 (HRKEASNKDET) shows a compositional bias: basic and acidic residues. The disordered stretch occupies residues 307 to 326 (DNRKRVESSYSPSTKEPERK). Residues 340–397 (HEKELNKMRSQLYQEEDLCSEQERMRNEISELTQELHQKEVTIATIMKKAALLERQLK) adopt a coiled-coil conformation. Serine 544 is modified (phosphoserine). A coiled-coil region spans residues 555 to 586 (AAQHFLMEEEKRAKELEKLLNTHIDELQRHTE).

Belongs to the CEP63 family. In terms of assembly, interacts with CEP152; the interaction is mutually exclusive with CEP63.

The protein localises to the cytoplasm. In terms of biological role, key structural component of the deuterosome, a structure that promotes de novo centriole amplification in multiciliated cells. Deuterosome-mediated centriole amplification occurs in terminally differentiated multiciliated cells and can generate more than 100 centrioles. Probably sufficient for the specification and formation of the deuterosome inner core. Interacts with CEP152 and recruits PLK4 to activate centriole biogenesis. The polypeptide is Deuterosome assembly protein 1 (Rattus norvegicus (Rat)).